Consider the following 156-residue polypeptide: Small ribosomal subunit protein uS7 (156 aa).

Belongs to the universal ribosomal protein uS7 family. In terms of assembly, part of the 30S ribosomal subunit. Contacts proteins S9 and S11.

One of the primary rRNA binding proteins, it binds directly to 16S rRNA where it nucleates assembly of the head domain of the 30S subunit. Is located at the subunit interface close to the decoding center, probably blocks exit of the E-site tRNA. The protein is Small ribosomal subunit protein uS7 of Carsonella ruddii.